A 232-amino-acid chain; its full sequence is Phosphatidylserine decarboxylase proenzyme (232 aa).

Ser-190 (schiff-base intermediate with substrate; via pyruvic acid) is an active-site residue. Ser-190 is subject to Pyruvic acid (Ser); by autocatalysis.

The protein belongs to the phosphatidylserine decarboxylase family. PSD-A subfamily. As to quaternary structure, heterodimer of a large membrane-associated beta subunit and a small pyruvoyl-containing alpha subunit. It depends on pyruvate as a cofactor. In terms of processing, is synthesized initially as an inactive proenzyme. Formation of the active enzyme involves a self-maturation process in which the active site pyruvoyl group is generated from an internal serine residue via an autocatalytic post-translational modification. Two non-identical subunits are generated from the proenzyme in this reaction, and the pyruvate is formed at the N-terminus of the alpha chain, which is derived from the carboxyl end of the proenzyme. The post-translation cleavage follows an unusual pathway, termed non-hydrolytic serinolysis, in which the side chain hydroxyl group of the serine supplies its oxygen atom to form the C-terminus of the beta chain, while the remainder of the serine residue undergoes an oxidative deamination to produce ammonia and the pyruvoyl prosthetic group on the alpha chain.

It localises to the cell membrane. The catalysed reaction is a 1,2-diacyl-sn-glycero-3-phospho-L-serine + H(+) = a 1,2-diacyl-sn-glycero-3-phosphoethanolamine + CO2. It functions in the pathway phospholipid metabolism; phosphatidylethanolamine biosynthesis; phosphatidylethanolamine from CDP-diacylglycerol: step 2/2. In terms of biological role, catalyzes the formation of phosphatidylethanolamine (PtdEtn) from phosphatidylserine (PtdSer). This Rhizobium etli (strain CIAT 652) protein is Phosphatidylserine decarboxylase proenzyme.